The chain runs to 454 residues: Jacalin-related lectin 37 (454 aa).

The region spanning 295–438 (SRFTPPRGIQ…LTALGVHFSP (144 aa)) is the Jacalin-type lectin domain.

The protein belongs to the jacalin lectin family.

This chain is Jacalin-related lectin 37 (JAL37), found in Arabidopsis thaliana (Mouse-ear cress).